Here is a 152-residue protein sequence, read N- to C-terminus: Large ribosomal subunit protein bL9 (152 aa).

The protein belongs to the bacterial ribosomal protein bL9 family.

Functionally, binds to the 23S rRNA. The chain is Large ribosomal subunit protein bL9 from Prochlorococcus marinus (strain SARG / CCMP1375 / SS120).